The sequence spans 309 residues: Epidermal retinol dehydrogenase 2 (309 aa).

A helical membrane pass occupies residues Leu-11–Ile-31. Residue Leu-44–Val-68 participates in NADP(+) binding. Substrate is bound at residue Ser-177. Residue Tyr-190 is the Proton acceptor of the active site. The helical transmembrane segment at Phe-270–Ala-290 threads the bilayer.

Belongs to the short-chain dehydrogenases/reductases (SDR) family.

It localises to the endoplasmic reticulum membrane. It carries out the reaction all-trans-retinol--[retinol-binding protein] + NAD(+) = all-trans-retinal--[retinol-binding protein] + NADH + H(+). It functions in the pathway cofactor metabolism; retinol metabolism. In terms of biological role, oxidoreductase with strong preference for NAD. Active in both the oxidative and reductive directions. Oxidizes all-trans-retinol in all-trans-retinaldehyde. No activity was detected with 11-cis-retinol or 11-cis-retinaldehyde as substrates with either NAD(+)/NADH or NADP(+)/NADPH. In Mus musculus (Mouse), this protein is Epidermal retinol dehydrogenase 2.